We begin with the raw amino-acid sequence, 1461 residues long: Selection and upkeep of intraepithelial T-cells protein 5 (1461 aa).

Positions 1–24 (MGAVGIPLTAHCVVLFLLQMVALS) are cleaved as a signal peptide. Topologically, residues 25 to 1306 (SEQFTVNGLE…CNKRNPFWKK (1282 aa)) are extracellular. An Ig-like V-type domain is found at 26–139 (EQFTVNGLES…FYEEHIIDVK (114 aa)). Disulfide bonds link Cys-49/Cys-123 and Cys-163/Cys-217. The Ig-like C1-type domain maps to 142–231 (ATSSDIQILM…FVTHQEESIS (90 aa)). Residue Asn-200 is glycosylated (N-linked (GlcNAc...) asparagine). Residues 1307–1327 (YALDLGISVFTIIVVTLIMHL) traverse the membrane as a helical segment. The Cytoplasmic segment spans residues 1328-1345 (KQREADQHFELNTLWSKD). The helical transmembrane segment at 1346–1366 (TSVILCVLIMFNNRLKALIYF) threads the bilayer. Over 1367–1387 (RLYGFSPPGKAHKYIVNYILR) the chain is Extracellular. A helical transmembrane segment spans residues 1388 to 1408 (FSHPVFCIVYSATILYMYLQI). The Cytoplasmic segment spans residues 1409–1427 (QNKDSLFSLYNSWMVEMEM). The chain crosses the membrane as a helical span at residues 1428 to 1448 (VLIFLLVIFNVKNIATVLLYF). Residues 1449–1461 (DSTTLRLFFWIKG) are Extracellular-facing.

The protein belongs to the SKINT family. Expressed in skin and, to a lower extent, testis.

It is found in the membrane. In terms of biological role, may act by engaging a cell surface molecule on immature T-cells in the embryonic thymus. This Mus musculus (Mouse) protein is Selection and upkeep of intraepithelial T-cells protein 5 (Skint5).